The sequence spans 360 residues: SPRY domain-containing SOCS box protein 3 (360 aa).

Residues 21-54 are disordered; that stretch reads DQDGRSPALHAEEEAWGYDSDGQHSNSDSDTDLL. In terms of domain architecture, B30.2/SPRY spans 84–274; that stretch reads SLHPFRQIKS…MKVIRSCCCR (191 aa). Positions 264–315 constitute an SOCS box domain; it reads SMKVIRSCCCRTSLQYLCCARLRQLLPGSVDSLEVLPLPPGLKQVLSNKLGW. The tract at residues 322–350 is disordered; it reads NRSSQHKGDGSATTSCGSYSDSSCTPGHD. Polar residues predominate over residues 332-346; sequence SATTSCGSYSDSSCT.

This sequence belongs to the SPSB family. As to quaternary structure, substrate-recognition component of the ECS(SPSB3) complex, composed of spsb3, cul5, elob, elob and rnf7/rbx2.

The protein localises to the nucleus. The protein operates within protein modification; protein ubiquitination. Its function is as follows. Substrate-recognition component of a cullin-5-RING E3 ubiquitin-protein ligase complex (ECS complex, also named CRL5 complex), which mediates the ubiquitination and subsequent proteasomal degradation of target proteins. The protein is SPRY domain-containing SOCS box protein 3 (spsb3) of Xenopus laevis (African clawed frog).